Reading from the N-terminus, the 387-residue chain is Oleoyl-12-hydroxylase FAH12 (387 aa).

The interval 1–34 (MGGGGRMSTVITSNNSEKKGGSSHLKRAPHTKPP) is disordered. A run of 2 helical transmembrane segments spans residues 61-81 (AYDV…FPYI) and 88-108 (VAWL…WVIG). The Histidine box-1 motif lies at 109 to 113 (HECGH). Residues 121–141 (LADDIVGLIVHSALLVPYFSW) traverse the membrane as a helical segment. Positions 145 to 149 (HRRHH) match the Histidine box-2 motif. Transmembrane regions (helical) follow at residues 183–203 (VLTL…FNVS), 229–249 (IYIA…ATMA), and 253–273 (AWVM…LVMI). The Histidine box-3 signature appears at 319–323 (HVAHH).

The protein belongs to the fatty acid desaturase type 1 family. Expressed in seeds. Barely detected in leaves.

The protein localises to the microsome membrane. It carries out the reaction a 1-acyl-2-(9Z)-octadecenoyl-sn-glycero-3-phosphocholine + 2 Fe(II)-[cytochrome b5] + O2 + 2 H(+) = a 1-acyl-2-[(R)-12-hydroxyoleoyl]-sn-glycero-3-phosphocholine + 2 Fe(III)-[cytochrome b5] + H2O. The protein operates within lipid metabolism; monounsaturated fatty acid biosynthesis. With respect to regulation, inhibited by oleoyloxyethyl phosphocholine. Its function is as follows. Oleoyl-12-hydroxylase involved in the biosynthesis of ricinoleate (12-hydroxy-cis-9-octadecenoate), the major fatty acid constituent of the oil seeds from castor bean plants. Catalyzes the hydroxylation at the 12-position of 1-acyl-2-oleoyl-sn-glycero-3-phosphocholine (2-oleoyl-PC), which seems to be the actual physiological subtrate. It uses cytochrome b5 as an electron donor. May also be involved in the production of lesquerolic acid (14-hydroxyeicos-cis-ll-enoic acid) in vitro. The polypeptide is Oleoyl-12-hydroxylase FAH12 (Ricinus communis (Castor bean)).